Consider the following 220-residue polypeptide: Probable N-acetyl-alpha-D-glucosaminyl L-malate deacetylase 2 (220 aa).

H11, D14, and H125 together coordinate Zn(2+).

This sequence belongs to the PIGL family. It depends on Zn(2+) as a cofactor.

The catalysed reaction is (S)-malyl N-acetyl-alpha-D-glucosaminide + H2O = (S)-malyl alpha-D-glucosaminide + acetate. Its function is as follows. Involved in bacillithiol (BSH) biosynthesis. Catalyzes the second step of the pathway, the deacetylation of N-acetylglucosaminylmalate (GlcNAc-Mal) to glucosamine malate (GlcN-Mal). Has weak activity compared with bshB1. The chain is Probable N-acetyl-alpha-D-glucosaminyl L-malate deacetylase 2 from Bacillus cereus (strain ATCC 14579 / DSM 31 / CCUG 7414 / JCM 2152 / NBRC 15305 / NCIMB 9373 / NCTC 2599 / NRRL B-3711).